The chain runs to 366 residues: Flagellar P-ring protein (366 aa).

The first 23 residues, 1-23 (MRTLKIFALAVSLLSMLAAPVQA), serve as a signal peptide directing secretion.

This sequence belongs to the FlgI family. In terms of assembly, the basal body constitutes a major portion of the flagellar organelle and consists of four rings (L,P,S, and M) mounted on a central rod.

It is found in the periplasm. It localises to the bacterial flagellum basal body. In terms of biological role, assembles around the rod to form the L-ring and probably protects the motor/basal body from shearing forces during rotation. The chain is Flagellar P-ring protein from Idiomarina loihiensis (strain ATCC BAA-735 / DSM 15497 / L2-TR).